Consider the following 330-residue polypeptide: MKILVTGGGGFLGQALCRGLVERGHQVLAFNRSHYPELQVMGVGQIRGDLADPQAVLHAVAGVDAVFHNGAKAGAWGSYDSYHQANVIGTDNVIAACRAHGIGRLVYTSTPSVTHRATHPVEGLGADEVPYGEDFQAPYAATKAIAEQRVLAANDASLATVALRPRLIWGPGDQQLVPRLAERARQGRLRLVGDGSNKVDTTYIDNAALAHFLAFEALAPGAACAGKAYFISNGEPLPMRELVNQLLAAVGAPRVDKAISFKTAYRIGAICERLWPLLRLRGEPPLTRFLAEQLCTPHWYSMEPARRDFGYVPQVSIEEGLRRLKASSAA.

Tyrosine 139 (proton acceptor) is an active-site residue. Lysine 143 contacts NADP(+).

Belongs to the 3-beta-HSD family. In terms of assembly, homodimer.

The catalysed reaction is a (2R,3S)-2-alkyl-3-hydroxyalkanoate + NADP(+) = an (R)-2-alkyl-3-oxoalkanoate + NADPH + H(+). In terms of biological role, involved in olefin biosynthesis. Catalyzes the reversible stereospecific NADPH-dependent reduction of 2-alkyl-3-oxoalkanoic acids to 2-alkyl-3-hydroxyalkanoic acids. In the oxidative direction, syn-2-decyl-3-hydroxytetradecanoic acid is the preferred substrate. In the reductive direction, (2R/S)-2-hexyl-3-ketodecanoic acid is accepted as substrate. The sequence is that of 2-alkyl-3-oxoalkanoate reductase from Stenotrophomonas maltophilia (strain K279a).